The primary structure comprises 417 residues: NADH-quinone oxidoreductase subunit D (417 aa).

Belongs to the complex I 49 kDa subunit family. In terms of assembly, NDH-1 is composed of 14 different subunits. Subunits NuoB, C, D, E, F, and G constitute the peripheral sector of the complex.

It localises to the cell inner membrane. The enzyme catalyses a quinone + NADH + 5 H(+)(in) = a quinol + NAD(+) + 4 H(+)(out). In terms of biological role, NDH-1 shuttles electrons from NADH, via FMN and iron-sulfur (Fe-S) centers, to quinones in the respiratory chain. The immediate electron acceptor for the enzyme in this species is believed to be ubiquinone. Couples the redox reaction to proton translocation (for every two electrons transferred, four hydrogen ions are translocated across the cytoplasmic membrane), and thus conserves the redox energy in a proton gradient. In Legionella pneumophila (strain Corby), this protein is NADH-quinone oxidoreductase subunit D.